We begin with the raw amino-acid sequence, 200 residues long: Interferon lambda-2 (200 aa).

The N-terminal stretch at 1-25 (MKLDMTGDCTPVLVLMAAVLTVTGA) is a signal peptide.

Belongs to the lambda interferon family.

Its subcellular location is the secreted. In terms of biological role, cytokine with antiviral, antitumour and immunomodulatory activities. Plays a critical role in the antiviral host defense, predominantly in the epithelial tissues. Acts as a ligand for the heterodimeric class II cytokine receptor composed of IL10RB and IFNLR1, and receptor engagement leads to the activation of the JAK/STAT signaling pathway resulting in the expression of IFN-stimulated genes (ISG), which mediate the antiviral state. Has a restricted receptor distribution and therefore restricted targets: is primarily active in epithelial cells and this cell type-selective action is because of the epithelial cell-specific expression of its receptor IFNLR1. Seems not to be essential for early virus-activated host defense in vaginal infection, but plays an important role in Toll-like receptor (TLR)-induced antiviral defense. Plays a significant role in the antiviral immune defense in the intestinal epithelium. Exerts an immunomodulatory effect by up-regulating MHC class I antigen expression. The protein is Interferon lambda-2 (IFNL2) of Homo sapiens (Human).